The sequence spans 704 residues: Polyribonucleotide nucleotidyltransferase (704 aa).

Mg(2+)-binding residues include aspartate 487 and aspartate 493. One can recognise a KH domain in the interval 554-613 (PRLLTIKIHPDKIREVIGKGGSTIQAITKETGTQIDIQDDGTIIIASVNAIAAQAAKSRI). Residues 623-691 (GRIYEGKVAK…KQGRIRLSIK (69 aa)) form the S1 motif domain.

The protein belongs to the polyribonucleotide nucleotidyltransferase family. As to quaternary structure, component of the RNA degradosome, which is a multiprotein complex involved in RNA processing and mRNA degradation. It depends on Mg(2+) as a cofactor.

Its subcellular location is the cytoplasm. It carries out the reaction RNA(n+1) + phosphate = RNA(n) + a ribonucleoside 5'-diphosphate. In terms of biological role, involved in mRNA degradation. Catalyzes the phosphorolysis of single-stranded polyribonucleotides processively in the 3'- to 5'-direction. This chain is Polyribonucleotide nucleotidyltransferase, found in Xanthomonas campestris pv. campestris (strain 8004).